The sequence spans 214 residues: Type 4 apparatus protein DotN (214 aa).

Zn(2+) is bound by residues cysteine 52, cysteine 55, cysteine 84, and cysteine 87.

The T4BSS is a complex nanomachine composed of several subcomplexes. This subunit is part of the Type IV Coupling Complex (T4CC), a subcomplex composed of the DotLMNYZ core and the IcmSW-LvgA adapter subunits, linked by the C-terminal tail of DotL. Six DotLMNYZ hetero-pentameric units may assemble into a hexameric nanomachine, forming an inner membrane channel for effectors to pass through. Interacts directly with DotL. Interacts with DotZ.

Its subcellular location is the cytoplasm. Component of the Dot/Icm type IVB secretion system (T4BSS), which is used to inject bacterial effector proteins into eukaryotic host cells. Part of a subcomplex which recruits effector proteins and delivers them to the core transmembrane subcomplex. This Legionella pneumophila subsp. pneumophila (strain Philadelphia 1 / ATCC 33152 / DSM 7513) protein is Type 4 apparatus protein DotN.